The sequence spans 405 residues: Argininosuccinate synthase (405 aa).

ATP is bound by residues 10-18 and alanine 37; that span reads AYSGGLDTS. The L-citrulline site is built by tyrosine 88 and serine 93. Residue glycine 118 coordinates ATP. Positions 120, 124, and 125 each coordinate L-aspartate. Residue asparagine 124 participates in L-citrulline binding. L-citrulline contacts are provided by arginine 128, serine 179, serine 188, glutamate 264, and tyrosine 276.

The protein belongs to the argininosuccinate synthase family. Type 1 subfamily. Homotetramer.

The protein localises to the cytoplasm. It carries out the reaction L-citrulline + L-aspartate + ATP = 2-(N(omega)-L-arginino)succinate + AMP + diphosphate + H(+). Its pathway is amino-acid biosynthesis; L-arginine biosynthesis; L-arginine from L-ornithine and carbamoyl phosphate: step 2/3. This Pseudomonas fluorescens (strain SBW25) protein is Argininosuccinate synthase.